We begin with the raw amino-acid sequence, 200 residues long: Probable molybdenum cofactor guanylyltransferase (200 aa).

GTP-binding positions include 9–11 (LAG), Lys21, Asp69, and Asp100. Residue Asp100 coordinates Mg(2+).

The protein belongs to the MobA family. The cofactor is Mg(2+).

Its subcellular location is the cytoplasm. The enzyme catalyses Mo-molybdopterin + GTP + H(+) = Mo-molybdopterin guanine dinucleotide + diphosphate. In terms of biological role, transfers a GMP moiety from GTP to Mo-molybdopterin (Mo-MPT) cofactor (Moco or molybdenum cofactor) to form Mo-molybdopterin guanine dinucleotide (Mo-MGD) cofactor. The sequence is that of Probable molybdenum cofactor guanylyltransferase from Bacillus mycoides (strain KBAB4) (Bacillus weihenstephanensis).